Reading from the N-terminus, the 399-residue chain is Transmembrane protein 237 homolog (399 aa).

Positions 1–11 (MPPTSRPVPPP) are enriched in pro residues. Residues 1-158 (MPPTSRPVPP…PHDKRNMPAK (158 aa)) are disordered. 3 stretches are compositionally biased toward basic and acidic residues: residues 36–45 (NQQRRFRENN), 111–135 (EAAKHSREDPSGETVEVRRPNDPRR), and 144–158 (KSFRDPHDKRNMPAK). The next 4 helical transmembrane spans lie at 222–242 (IANIIQGFLAGISVMLAIFSF), 256–276 (MSLPIHAGFMVAFTVGLVSAI), 301–321 (GLITFIVWFVGLVSTLLCIQL), and 343–363 (VFNVLRALTSGLGFLLLAFKP).

Belongs to the TMEM237 family.

It localises to the membrane. It is found in the cell projection. Its subcellular location is the cilium. Functionally, component of the transition zone in primary cilia. Required for ciliogenesis. The sequence is that of Transmembrane protein 237 homolog from Caenorhabditis elegans.